Reading from the N-terminus, the 79-residue chain is Small ribosomal subunit protein bS18 (79 aa).

This sequence belongs to the bacterial ribosomal protein bS18 family. In terms of assembly, part of the 30S ribosomal subunit. Forms a tight heterodimer with protein bS6.

Its function is as follows. Binds as a heterodimer with protein bS6 to the central domain of the 16S rRNA, where it helps stabilize the platform of the 30S subunit. This Rhodopseudomonas palustris (strain BisB5) protein is Small ribosomal subunit protein bS18.